Consider the following 227-residue polypeptide: uncharacterized protein (227 aa).

This sequence to ORF5 in pFZ1.

This is an uncharacterized protein from Methanothermobacter thermautotrophicus (Methanobacterium thermoformicicum).